Here is a 383-residue protein sequence, read N- to C-terminus: BRISC and BRCA1-A complex member 2 (383 aa).

Met-1 bears the N-acetylmethionine mark. Phosphoserine is present on Ser-2. UEV-like regions lie at residues 30-147 (DATN…TLLE) and 275-364 (IAAF…RAKA).

The protein belongs to the BABAM2 family. As to quaternary structure, component of the ARISC complex, at least composed of UIMC1/RAP80, ABRAXAS1, BRCC3/BRCC36, BABAM2 and BABAM1/NBA1. Component of the BRCA1-A complex, at least composed of BRCA1, BARD1, UIMC1/RAP80, ABRAXAS1, BRCC3/BRCC36, BABAM2 and BABAM1/NBA1. In the BRCA1-A complex, interacts directly with ABRAXAS1, BRCC3/BRCC36 and BABAM1/NBA1. Binds polyubiquitin. Component of the BRISC complex, at least composed of ABRAXAS2, BRCC3/BRCC36, BABAM2 and BABAM1/NBA1. Identified in a complex with SHMT2 and the other subunits of the BRISC complex. Component of the BRCA1/BRCA2 containing complex (BRCC), which also contains BRCA1, BRCA2, BARD1, BRCC3/BRCC36 and RAD51. BRCC is a ubiquitin E3 ligase complex that enhances cellular survival following DNA damage. May interact with FAS and TNFRSF1A.

The protein localises to the cytoplasm. It is found in the nucleus. In terms of biological role, component of the BRCA1-A complex, a complex that specifically recognizes 'Lys-63'-linked ubiquitinated histones H2A and H2AX at DNA lesions sites, leading to target the BRCA1-BARD1 heterodimer to sites of DNA damage at double-strand breaks (DSBs). The BRCA1-A complex also possesses deubiquitinase activity that specifically removes 'Lys-63'-linked ubiquitin on histones H2A and H2AX. In the BRCA1-A complex, it acts as an adapter that bridges the interaction between BABAM1/NBA1 and the rest of the complex, thereby being required for the complex integrity and modulating the E3 ubiquitin ligase activity of the BRCA1-BARD1 heterodimer. Component of the BRISC complex, a multiprotein complex that specifically cleaves 'Lys-63'-linked ubiquitin in various substrates. Within the BRISC complex, acts as an adapter that bridges the interaction between BABAM1/NBA1 and the rest of the complex, thereby being required for the complex integrity. The BRISC complex is required for normal mitotic spindle assembly and microtubule attachment to kinetochores via its role in deubiquitinating NUMA1. The BRISC complex plays a role in interferon signaling via its role in the deubiquitination of the interferon receptor IFNAR1; deubiquitination increases IFNAR1 activity by enhancing its stability and cell surface expression. Down-regulates the response to bacterial lipopolysaccharide (LPS) via its role in IFNAR1 deubiquitination. May play a role in homeostasis or cellular differentiation in cells of neural, epithelial and germline origins. May also act as a death receptor-associated anti-apoptotic protein, which inhibits the mitochondrial apoptotic pathway. May regulate TNF-alpha signaling through its interactions with TNFRSF1A; however these effects may be indirect. The chain is BRISC and BRCA1-A complex member 2 from Rattus norvegicus (Rat).